Consider the following 304-residue polypeptide: Acetylglutamate kinase (304 aa).

Substrate-binding positions include G70 to G71, R92, and N185.

It belongs to the acetylglutamate kinase family. ArgB subfamily.

The protein localises to the cytoplasm. It carries out the reaction N-acetyl-L-glutamate + ATP = N-acetyl-L-glutamyl 5-phosphate + ADP. The protein operates within amino-acid biosynthesis; L-arginine biosynthesis; N(2)-acetyl-L-ornithine from L-glutamate: step 2/4. In terms of biological role, catalyzes the ATP-dependent phosphorylation of N-acetyl-L-glutamate. In Paracoccus denitrificans (strain Pd 1222), this protein is Acetylglutamate kinase.